Reading from the N-terminus, the 156-residue chain is Anaerobic ribonucleoside-triphosphate reductase-activating protein (156 aa).

Positions 26, 30, and 33 each coordinate [4Fe-4S] cluster. S-adenosyl-L-methionine contacts are provided by residues 32 to 34 (GCY) and G72.

It belongs to the organic radical-activating enzymes family. In terms of assembly, forms a tetramer composed of two NrdD and two NrdG subunits. The cofactor is [4Fe-4S] cluster.

It carries out the reaction glycyl-[protein] + reduced [flavodoxin] + S-adenosyl-L-methionine = glycin-2-yl radical-[protein] + semiquinone [flavodoxin] + 5'-deoxyadenosine + L-methionine + H(+). In terms of biological role, activation of anaerobic ribonucleoside-triphosphate reductase under anaerobic conditions by generation of an organic free radical, using S-adenosylmethionine and reduced flavodoxin as cosubstrates to produce 5'-deoxy-adenosine. The sequence is that of Anaerobic ribonucleoside-triphosphate reductase-activating protein (NRDG) from Escherichia coli (Bacteriophage T4).